We begin with the raw amino-acid sequence, 1042 residues long: Diacylglycerol lipase-alpha (1042 aa).

The Cytoplasmic portion of the chain corresponds to 1 to 22 (MPGIVVFRRRWSVGSDDLVLPA). Residues 23–43 (IFLFLLHTTWFVILSVVLFGL) traverse the membrane as a helical segment. At 44–60 (VYNPHEACSLNLVDHGR) the chain is on the extracellular side. The helical transmembrane segment at 61–81 (GYLGILLSCMIAEMAIIWLSM) threads the bilayer. Residues 82-101 (RGGILYTEPRDSMQYVLYVR) lie on the Cytoplasmic side of the membrane. A helical membrane pass occupies residues 102–122 (LAILVIEFIYAIVGIVWLTQY). The Extracellular portion of the chain corresponds to 123-136 (YTSCNDLTAKNVTL). A glycan (N-linked (GlcNAc...) asparagine) is linked at Asn133. Residues 137–157 (GMVVCNWVVILSVCITVLCVF) form a helical membrane-spanning segment. Over 158-1042 (DPTGRTFVKL…KQDELVISAR (885 aa)) the chain is Cytoplasmic. Residues Ser472 and Asp524 each act as charge relay system in the active site. Residues Ser727, Ser729, Ser732, Ser743, Ser782, Ser784, Ser806, Ser808, Ser833, Ser847, and Ser952 each carry the phosphoserine modification. The disordered stretch occupies residues 846-903 (LSKHSQDTQPLEAALGSGGVTPERPPSAAANDEEEEVGGGGGGPASRGELALHNGRLG). Positions 1014–1042 (LAADKIRTSTPTGHGASPAKQDELVISAR) are disordered. Phosphothreonine is present on Thr1023.

Belongs to the AB hydrolase superfamily. Lipase family. Interacts (via C-terminal) with CAMK2A; leading to the phosphorylation and inhibition of DAGLA enzymatic activity. Interacts (via PPXXF motif) with HOMER1 and HOMER2; this interaction is required for DAGLA membrane localization. Requires Ca(2+) as cofactor. Phosphorylated at Ser-782 and Ser-808 by CAMK2A; phosphorylation by CAMK2A inhibits diacylglycerol lipase activity. Highly expressed in brain and pancreas.

The protein localises to the cell membrane. It localises to the postsynaptic density membrane. Its subcellular location is the early endosome membrane. The protein resides in the cell projection. It is found in the dendritic spine membrane. It carries out the reaction a 1,2-diacyl-sn-glycerol + H2O = a 2-acylglycerol + a fatty acid + H(+). It catalyses the reaction 1-octadecanoyl-2-(5Z,8Z,11Z,14Z-eicosatetraenoyl)-sn-glycerol + H2O = 2-(5Z,8Z,11Z,14Z-eicosatetraenoyl)-glycerol + octadecanoate + H(+). The enzyme catalyses 1,2-di-(9Z-octadecenoyl)-sn-glycerol + H2O = 2-(9Z-octadecenoyl)-glycerol + (9Z)-octadecenoate + H(+). The catalysed reaction is 1-(9Z-octadecenoyl)-2-(5Z,8Z,11Z,14Z-eicosatetraenoyl)-sn-glycerol + H2O = 2-(5Z,8Z,11Z,14Z-eicosatetraenoyl)-glycerol + (9Z)-octadecenoate + H(+). It carries out the reaction 1-(9Z-octadecenoyl)-2-octadecanoyl-sn-glycerol + H2O = 2-octadecanoylglycerol + (9Z)-octadecenoate + H(+). It catalyses the reaction 1-(9Z-octadecenoyl)-2-(9Z,12Z-octadecadienoyl)-sn-glycerol + H2O = 2-(9Z,12Z-octadecadienoyl)-glycerol + (9Z)-octadecenoate + H(+). The enzyme catalyses 1-(9Z-octadecenoyl)-2-O-(5Z,8Z,11Z,14Z-eicosatetraenyl)-sn-glycerol + H2O = 2-O-(5Z,8Z,11Z,14Z)-eicosatetraenylglycerol + (9Z)-octadecenoate + H(+). Its activity is regulated as follows. Inhibited by 1,2,3-triazole urea covalent inhibitors KT172, DH376 and DO34. Inhibited by p-hydroxy-mercuri-benzoate and HgCl(2), but not to PMSF. Also inhibited by RHC80267. Diacylglycerol lipase activity is inhibited by the phosphorylation of Ser-782 and Ser-808 by CAMK2A. Its function is as follows. Serine hydrolase that hydrolyzes arachidonic acid-esterified diacylglycerols (DAGs) to produce the principal endocannabinoid, 2-arachidonoylglycerol (2-AG). Preferentially hydrolyzes sn-1 fatty acids from diacylglycerols (DAG) that contain arachidonic acid (AA) esterified at the sn-2 position to biosynthesize 2-AG. Has negligible activity against other lipids including monoacylglycerols and phospholipids. Plays a key role in regulating 2-AG signaling in the central nervous system (CNS). Regulates 2-AG involved in retrograde suppression at central synapses. Supports axonal growth during development and adult neurogenesis. Plays a role for eCB signaling in the physiological regulation of anxiety and depressive behaviors. Also regulates neuroinflammatory responses in the brain, in particular, LPS-induced microglial activation. In Homo sapiens (Human), this protein is Diacylglycerol lipase-alpha (DAGLA).